The primary structure comprises 375 residues: Holliday junction branch migration complex subunit RuvB (375 aa).

Polar residues predominate over residues 1–22 (MAIVSSKQSPQPDGSKKPSQAK). Residues 1–44 (MAIVSSKQSPQPDGSKKPSQAKSVKKSVEHSKPQQTDALLQPEA) are disordered. The segment at 13–218 (DGSKKPSQAK…FGFVQRLRFY (206 aa)) is large ATPase domain (RuvB-L). ATP-binding positions include leucine 57, arginine 58, glycine 99, lysine 102, threonine 103, threonine 104, 165–167 (EDF), arginine 208, tyrosine 218, and arginine 255. Threonine 103 serves as a coordination point for Mg(2+). The segment at 219 to 289 (EADELGQIVL…IAQEALELFN (71 aa)) is small ATPAse domain (RuvB-S). Residues 292–375 (PCGLDWTDRR…PPDEQMRLLS (84 aa)) are head domain (RuvB-H). DNA-binding residues include arginine 347 and arginine 352.

It belongs to the RuvB family. In terms of assembly, homohexamer. Forms an RuvA(8)-RuvB(12)-Holliday junction (HJ) complex. HJ DNA is sandwiched between 2 RuvA tetramers; dsDNA enters through RuvA and exits via RuvB. An RuvB hexamer assembles on each DNA strand where it exits the tetramer. Each RuvB hexamer is contacted by two RuvA subunits (via domain III) on 2 adjacent RuvB subunits; this complex drives branch migration. In the full resolvosome a probable DNA-RuvA(4)-RuvB(12)-RuvC(2) complex forms which resolves the HJ.

The protein resides in the cytoplasm. It carries out the reaction ATP + H2O = ADP + phosphate + H(+). In terms of biological role, the RuvA-RuvB-RuvC complex processes Holliday junction (HJ) DNA during genetic recombination and DNA repair, while the RuvA-RuvB complex plays an important role in the rescue of blocked DNA replication forks via replication fork reversal (RFR). RuvA specifically binds to HJ cruciform DNA, conferring on it an open structure. The RuvB hexamer acts as an ATP-dependent pump, pulling dsDNA into and through the RuvAB complex. RuvB forms 2 homohexamers on either side of HJ DNA bound by 1 or 2 RuvA tetramers; 4 subunits per hexamer contact DNA at a time. Coordinated motions by a converter formed by DNA-disengaged RuvB subunits stimulates ATP hydrolysis and nucleotide exchange. Immobilization of the converter enables RuvB to convert the ATP-contained energy into a lever motion, pulling 2 nucleotides of DNA out of the RuvA tetramer per ATP hydrolyzed, thus driving DNA branch migration. The RuvB motors rotate together with the DNA substrate, which together with the progressing nucleotide cycle form the mechanistic basis for DNA recombination by continuous HJ branch migration. Branch migration allows RuvC to scan DNA until it finds its consensus sequence, where it cleaves and resolves cruciform DNA. This chain is Holliday junction branch migration complex subunit RuvB, found in Acaryochloris marina (strain MBIC 11017).